Consider the following 193-residue polypeptide: dITP/XTP pyrophosphatase (193 aa).

Residue 7–12 (SENENK) coordinates substrate. The Proton acceptor role is filled by D65. Residue D65 coordinates Mg(2+). Residues S66, 144 to 147 (FGYD), K167, and 172 to 173 (HR) each bind substrate.

Belongs to the HAM1 NTPase family. As to quaternary structure, homodimer. Requires Mg(2+) as cofactor.

The catalysed reaction is XTP + H2O = XMP + diphosphate + H(+). The enzyme catalyses dITP + H2O = dIMP + diphosphate + H(+). It carries out the reaction ITP + H2O = IMP + diphosphate + H(+). In terms of biological role, pyrophosphatase that catalyzes the hydrolysis of nucleoside triphosphates to their monophosphate derivatives, with a high preference for the non-canonical purine nucleotides XTP (xanthosine triphosphate), dITP (deoxyinosine triphosphate) and ITP. Seems to function as a house-cleaning enzyme that removes non-canonical purine nucleotides from the nucleotide pool, thus preventing their incorporation into DNA/RNA and avoiding chromosomal lesions. This is dITP/XTP pyrophosphatase from Tropheryma whipplei (strain TW08/27) (Whipple's bacillus).